Consider the following 320-residue polypeptide: MQTRKTFSWIKEQIARSISVSLLIYIITRTSISSAYPIFAQQGYENPREATGRIVCANCHLANKPVDVEVPQAVLPDTVFEAVVRIPYDKQLKQVLANGKKGGLNVGAVLILPEGFELAPTDRISPEMKEKIGNLSFQSYRPNKKNILVIGPVPGQKYSEIIFPILSPDPATNKDVHFLKYPIYVGGNRGRGQIYPDGSKSNNTVYNATAAGIVSKIIRKERGGYEISITDPSDGRQVVDIIPPGPELLVSEGESIQFDQPLTSNPNVGGFGQGDAEIVLQDPLRVQGLLFFLASVILAQIFLVLKKKQFEKVQLAEMNF.

A signal peptide spans 1–35; it reads MQTRKTFSWIKEQIARSISVSLLIYIITRTSISSA. Heme-binding residues include tyrosine 36, cysteine 56, cysteine 59, and histidine 60. Residues 286-306 form a helical membrane-spanning segment; it reads VQGLLFFLASVILAQIFLVLK.

This sequence belongs to the cytochrome f family. The 4 large subunits of the cytochrome b6-f complex are cytochrome b6, subunit IV (17 kDa polypeptide, petD), cytochrome f and the Rieske protein, while the 4 small subunits are PetG, PetL, PetM and PetN. The complex functions as a dimer. Heme serves as cofactor.

Its subcellular location is the plastid. It localises to the chloroplast thylakoid membrane. Its function is as follows. Component of the cytochrome b6-f complex, which mediates electron transfer between photosystem II (PSII) and photosystem I (PSI), cyclic electron flow around PSI, and state transitions. This is Cytochrome f from Jasminum nudiflorum (Winter jasmine).